A 476-amino-acid polypeptide reads, in one-letter code: Aspartyl/glutamyl-tRNA(Asn/Gln) amidotransferase subunit B (476 aa).

The protein belongs to the GatB/GatE family. GatB subfamily. Heterotrimer of A, B and C subunits.

The catalysed reaction is L-glutamyl-tRNA(Gln) + L-glutamine + ATP + H2O = L-glutaminyl-tRNA(Gln) + L-glutamate + ADP + phosphate + H(+). It catalyses the reaction L-aspartyl-tRNA(Asn) + L-glutamine + ATP + H2O = L-asparaginyl-tRNA(Asn) + L-glutamate + ADP + phosphate + 2 H(+). Functionally, allows the formation of correctly charged Asn-tRNA(Asn) or Gln-tRNA(Gln) through the transamidation of misacylated Asp-tRNA(Asn) or Glu-tRNA(Gln) in organisms which lack either or both of asparaginyl-tRNA or glutaminyl-tRNA synthetases. The reaction takes place in the presence of glutamine and ATP through an activated phospho-Asp-tRNA(Asn) or phospho-Glu-tRNA(Gln). The polypeptide is Aspartyl/glutamyl-tRNA(Asn/Gln) amidotransferase subunit B (Solidesulfovibrio magneticus (strain ATCC 700980 / DSM 13731 / RS-1) (Desulfovibrio magneticus)).